A 162-amino-acid chain; its full sequence is Succinate dehydrogenase assembly factor 2, mitochondrial (162 aa).

The transit peptide at methionine 1–tryptophan 35 directs the protein to the mitochondrion.

This sequence belongs to the SDHAF2 family. As to quaternary structure, interacts with SDH1 within the SDH catalytic dimer.

It localises to the mitochondrion matrix. In terms of biological role, plays an essential role in the assembly of succinate dehydrogenase (SDH), an enzyme complex (also referred to as respiratory complex II) that is a component of both the tricarboxylic acid (TCA) cycle and the mitochondrial electron transport chain, and which couples the oxidation of succinate to fumarate with the reduction of ubiquinone (coenzyme Q) to ubiquinol. Required for flavinylation (covalent attachment of FAD) of the flavoprotein subunit SDH1 of the SDH catalytic dimer. It is unclear whether it participates in the chemistry of FAD attachment (enzymatic function) or acts as a chaperone that maintains SDH1 in a conformation that is susceptible to autocatalytic FAD attachment. Does not bind FAD or FADH(2) in vitro. Involved in sporulation. Required for the full activation of the early meiotic inducer IME1. This is Succinate dehydrogenase assembly factor 2, mitochondrial from Saccharomyces cerevisiae (strain ATCC 204508 / S288c) (Baker's yeast).